The primary structure comprises 251 residues: Putative glutamine amidotransferase YLR126C (251 aa).

The Glutamine amidotransferase type-1 domain maps to 48-232 (EVFHVQKNVF…NRYERQCQEL (185 aa)). Active-site for GATase activity residues include Cys-112, His-198, and Glu-200.

The protein resides in the cytoplasm. May have a role in copper and iron homeostasis. The protein is Putative glutamine amidotransferase YLR126C of Saccharomyces cerevisiae (strain ATCC 204508 / S288c) (Baker's yeast).